Here is a 667-residue protein sequence, read N- to C-terminus: Holliday junction recognition protein (667 aa).

The tract at residues 78-126 (LNGQAPEGDSESSGADTSLEENWPSCSSAMREASGDPRQRQPAVPGNTL) is disordered. 3 positions are modified to phosphoserine: Ser169, Ser185, and Ser195. Disordered regions lie at residues 181–201 (ISAK…GQGP) and 279–317 (RRRP…EPGK). Residues 279-297 (RRRPSRKQGLHKNRTHCPR) show a composition bias toward basic residues. Phosphoserine is present on residues Ser388, Ser424, Ser449, and Ser462. The segment at 443 to 530 (YRSGSKSPGS…NSEPTGKAVW (88 aa)) is disordered. A compositionally biased stretch (basic and acidic residues) spans 466 to 482 (GREKTERPGEALEDLRG). Over residues 496–515 (SCPSPEGSPSRSPSHSQLSS) the composition is skewed to low complexity. Lys554 participates in a covalent cross-link: Glycyl lysine isopeptide (Lys-Gly) (interchain with G-Cter in SUMO2). Ser567 carries the post-translational modification Phosphoserine. The disordered stretch occupies residues 596 to 617 (KRLNPDSPQQSSQKRSISPGCH). The span at 601–611 (DSPQQSSQKRS) shows a compositional bias: polar residues. Ser613 carries the post-translational modification Phosphoserine.

In terms of assembly, interacts with CENPA (via CATD domain); the interaction is direct and specific for CENPA since it does not interact with H3.1- or H3.3-containing nucleosomes. Heterotrimer composed of HJURP, CENPA and histone H4, where HJURP interacts with the dimer formed by CENPA and histone H4 and prevents tetramerization of CENPA and H4. Identified in a centromere complex containing histones H2A, H2B and H4, and at least CENPA, CENPB, CENPC, CENPT, CENPN, HJURP, SUPT16H, SSRP1 and RSF1. Interacts with 14-3-3 family members in a phosphorylation-dependent manner. Interacts with MSH5 and NBN.

It is found in the nucleus. It localises to the nucleolus. The protein resides in the chromosome. Its subcellular location is the centromere. Functionally, centromeric protein that plays a central role in the incorporation and maintenance of histone H3-like variant CENPA at centromeres. Acts as a specific chaperone for CENPA and is required for the incorporation of newly synthesized CENPA molecules into nucleosomes at replicated centromeres. Prevents CENPA-H4 tetramerization and prevents premature DNA binding by the CENPA-H4 tetramer. Directly binds Holliday junctions. The chain is Holliday junction recognition protein (Hjurp) from Mus musculus (Mouse).